The chain runs to 200 residues: Holliday junction branch migration complex subunit RuvA (200 aa).

A domain I region spans residues 1–63 (MIASVRGEVL…EDSMTLYGFP (63 aa)). Positions 64-142 (DSESKELFGL…AVASTSGAVP (79 aa)) are domain II. Residues 142–146 (PLGAG) form a flexible linker region. Positions 147–200 (GGGSVRDQIVEALVGLGFPAKQAEQAADSVLAEAPESTTSTALRSALSLLGKTR) are domain III.

This sequence belongs to the RuvA family. In terms of assembly, homotetramer. Forms an RuvA(8)-RuvB(12)-Holliday junction (HJ) complex. HJ DNA is sandwiched between 2 RuvA tetramers; dsDNA enters through RuvA and exits via RuvB. An RuvB hexamer assembles on each DNA strand where it exits the tetramer. Each RuvB hexamer is contacted by two RuvA subunits (via domain III) on 2 adjacent RuvB subunits; this complex drives branch migration. In the full resolvosome a probable DNA-RuvA(4)-RuvB(12)-RuvC(2) complex forms which resolves the HJ.

The protein localises to the cytoplasm. The RuvA-RuvB-RuvC complex processes Holliday junction (HJ) DNA during genetic recombination and DNA repair, while the RuvA-RuvB complex plays an important role in the rescue of blocked DNA replication forks via replication fork reversal (RFR). RuvA specifically binds to HJ cruciform DNA, conferring on it an open structure. The RuvB hexamer acts as an ATP-dependent pump, pulling dsDNA into and through the RuvAB complex. HJ branch migration allows RuvC to scan DNA until it finds its consensus sequence, where it cleaves and resolves the cruciform DNA. The chain is Holliday junction branch migration complex subunit RuvA from Rhodococcus jostii (strain RHA1).